A 181-amino-acid polypeptide reads, in one-letter code: DNA-packaging protein NU1 homolog (181 aa).

This sequence to phage lambda DNA packaging protein NU1.

This chain is DNA-packaging protein NU1 homolog (nohD), found in Escherichia coli (strain K12).